The following is a 439-amino-acid chain: Methionine aminopeptidase 2-1 (439 aa).

Residues 1–87 (MSGGESRSPD…DKLFPSGNFP (87 aa)) are disordered. Acidic residues predominate over residues 22–32 (GGDDEESDGDG). A compositionally biased stretch (basic residues) spans 47-61 (KKRKKRNKKKSKKKS). Histidine 190 is a binding site for substrate. 3 residues coordinate a divalent metal cation: aspartate 211, aspartate 222, and histidine 291. Histidine 299 provides a ligand contact to substrate. Residues glutamate 324 and glutamate 420 each contribute to the a divalent metal cation site.

It belongs to the peptidase M24A family. Methionine aminopeptidase eukaryotic type 2 subfamily. The cofactor is Co(2+). Zn(2+) is required as a cofactor. Mn(2+) serves as cofactor. It depends on Fe(2+) as a cofactor.

Its subcellular location is the cytoplasm. It carries out the reaction Release of N-terminal amino acids, preferentially methionine, from peptides and arylamides.. Functionally, cotranslationally removes the N-terminal methionine from nascent proteins. The N-terminal methionine is often cleaved when the second residue in the primary sequence is small and uncharged (Met-Ala-, Cys, Gly, Pro, Ser, Thr, or Val). This chain is Methionine aminopeptidase 2-1, found in Chaetomium globosum (strain ATCC 6205 / CBS 148.51 / DSM 1962 / NBRC 6347 / NRRL 1970) (Soil fungus).